Consider the following 367-residue polypeptide: Alginate lyase (367 aa).

A signal peptide spans 1-27 (MKTSHLIRIALPGALAAALLASQVSQA). Residues 65–66 (SK), 138–139 (HT), and Tyr256 contribute to the substrate site.

The protein belongs to the polysaccharide lyase 5 family.

The protein localises to the periplasm. It catalyses the reaction Eliminative cleavage of alginate to give oligosaccharides with 4-deoxy-alpha-L-erythro-hex-4-enuronosyl groups at their non-reducing ends and beta-D-mannuronate at their reducing end.. Its function is as follows. Catalyzes the depolymerization of alginate by cleaving the beta-1,4 glycosidic bond between two adjacent sugar residues via a beta-elimination mechanism. May serve to degrade mislocalized alginate that is trapped in the periplasmic space. The protein is Alginate lyase of Pseudomonas aeruginosa (strain LESB58).